Consider the following 353-residue polypeptide: GDSL esterase/lipase At5g03810 (353 aa).

An N-terminal signal peptide occupies residues 1 to 24 (MKMFITMSMCLSVIACFYAGVGTG). Serine 37 functions as the Nucleophile in the catalytic mechanism. 5 N-linked (GlcNAc...) asparagine glycosylation sites follow: asparagine 100, asparagine 255, asparagine 256, asparagine 260, and asparagine 320. Catalysis depends on residues aspartate 328 and histidine 331.

It belongs to the 'GDSL' lipolytic enzyme family.

It localises to the secreted. This Arabidopsis thaliana (Mouse-ear cress) protein is GDSL esterase/lipase At5g03810.